The chain runs to 115 residues: DNA-binding protein APE_1087b (115 aa).

It belongs to the PDCD5 family.

The polypeptide is DNA-binding protein APE_1087b (Aeropyrum pernix (strain ATCC 700893 / DSM 11879 / JCM 9820 / NBRC 100138 / K1)).